Consider the following 189-residue polypeptide: Small ribosomal subunit protein uS5 (189 aa).

Residues 22–85 (FVDKLVAINR…EAAKRDLIFV (64 aa)) enclose the S5 DRBM domain.

Belongs to the universal ribosomal protein uS5 family. In terms of assembly, part of the 30S ribosomal subunit. Contacts proteins S4 and S8.

Its function is as follows. With S4 and S12 plays an important role in translational accuracy. Functionally, located at the back of the 30S subunit body where it stabilizes the conformation of the head with respect to the body. This is Small ribosomal subunit protein uS5 from Sinorhizobium fredii (strain NBRC 101917 / NGR234).